Consider the following 261-residue polypeptide: Phosphatidylglycerol--prolipoprotein diacylglyceryl transferase (261 aa).

The next 7 helical transmembrane spans lie at 19-39, 56-76, 92-112, 126-146, 173-193, 199-219, and 227-247; these read VHWYGLMYLVGFAMAWGLALY, LIFYGALGLIIGGRLGYMLFY, WRGGMSFHGGLIGVIVTTWIF, FVVPLVPLGLAAGRIGNFING, QLYEFLLEGVLLFIVIWWFSA, FAVSSLFLLCYGLFRFTAEFF, and GFVAFGWLTRGQELSLPMIII. Arg-139 lines the a 1,2-diacyl-sn-glycero-3-phospho-(1'-sn-glycerol) pocket.

It belongs to the Lgt family.

It localises to the cell inner membrane. It carries out the reaction L-cysteinyl-[prolipoprotein] + a 1,2-diacyl-sn-glycero-3-phospho-(1'-sn-glycerol) = an S-1,2-diacyl-sn-glyceryl-L-cysteinyl-[prolipoprotein] + sn-glycerol 1-phosphate + H(+). It functions in the pathway protein modification; lipoprotein biosynthesis (diacylglyceryl transfer). In terms of biological role, catalyzes the transfer of the diacylglyceryl group from phosphatidylglycerol to the sulfhydryl group of the N-terminal cysteine of a prolipoprotein, the first step in the formation of mature lipoproteins. In Coxiella burnetii (strain CbuK_Q154) (Coxiella burnetii (strain Q154)), this protein is Phosphatidylglycerol--prolipoprotein diacylglyceryl transferase.